The following is a 149-amino-acid chain: Large ribosomal subunit protein uL13 (149 aa).

This sequence belongs to the universal ribosomal protein uL13 family. In terms of assembly, part of the 50S ribosomal subunit.

Functionally, this protein is one of the early assembly proteins of the 50S ribosomal subunit, although it is not seen to bind rRNA by itself. It is important during the early stages of 50S assembly. This is Large ribosomal subunit protein uL13 from Saccharolobus solfataricus (strain ATCC 35092 / DSM 1617 / JCM 11322 / P2) (Sulfolobus solfataricus).